Here is a 237-residue protein sequence, read N- to C-terminus: Ribonuclease PH (237 aa).

Residues Arg86 and 124–126 (GTR) contribute to the phosphate site.

This sequence belongs to the RNase PH family. Homohexameric ring arranged as a trimer of dimers.

The catalysed reaction is tRNA(n+1) + phosphate = tRNA(n) + a ribonucleoside 5'-diphosphate. Functionally, phosphorolytic 3'-5' exoribonuclease that plays an important role in tRNA 3'-end maturation. Removes nucleotide residues following the 3'-CCA terminus of tRNAs; can also add nucleotides to the ends of RNA molecules by using nucleoside diphosphates as substrates, but this may not be physiologically important. Probably plays a role in initiation of 16S rRNA degradation (leading to ribosome degradation) during starvation. This chain is Ribonuclease PH, found in Cereibacter sphaeroides (strain ATCC 17025 / ATH 2.4.3) (Rhodobacter sphaeroides).